The chain runs to 119 residues: Basic phospholipase A2 (119 aa).

Intrachain disulfides connect Cys-11–Cys-71, Cys-27–Cys-118, Cys-29–Cys-45, Cys-44–Cys-99, Cys-51–Cys-92, Cys-60–Cys-85, and Cys-78–Cys-90. Tyr-28, Gly-30, and Gly-32 together coordinate Ca(2+). The active site involves His-48. Asp-49 provides a ligand contact to Ca(2+). The active site involves Asp-93.

It belongs to the phospholipase A2 family. Group I subfamily. D49 sub-subfamily. Requires Ca(2+) as cofactor. Expressed by the venom gland.

It is found in the secreted. It carries out the reaction a 1,2-diacyl-sn-glycero-3-phosphocholine + H2O = a 1-acyl-sn-glycero-3-phosphocholine + a fatty acid + H(+). Functionally, snake venom phospholipase A2 (PLA2) that has several activities. It is myotoxic, has weak anticoagulant activity and inhibits neuromuscular transmission by blocking acetylcholine release from the nerve termini. PLA2 catalyzes the calcium-dependent hydrolysis of the 2-acyl groups in 3-sn-phosphoglycerides. The protein is Basic phospholipase A2 of Hydrophis schistosus (Beaked sea snake).